Here is a 372-residue protein sequence, read N- to C-terminus: 4-hydroxy-3-methylbut-2-en-1-yl diphosphate synthase (flavodoxin) (372 aa).

4 residues coordinate [4Fe-4S] cluster: C270, C273, C305, and E312.

The protein belongs to the IspG family. It depends on [4Fe-4S] cluster as a cofactor.

The catalysed reaction is (2E)-4-hydroxy-3-methylbut-2-enyl diphosphate + oxidized [flavodoxin] + H2O + 2 H(+) = 2-C-methyl-D-erythritol 2,4-cyclic diphosphate + reduced [flavodoxin]. It participates in isoprenoid biosynthesis; isopentenyl diphosphate biosynthesis via DXP pathway; isopentenyl diphosphate from 1-deoxy-D-xylulose 5-phosphate: step 5/6. Its function is as follows. Converts 2C-methyl-D-erythritol 2,4-cyclodiphosphate (ME-2,4cPP) into 1-hydroxy-2-methyl-2-(E)-butenyl 4-diphosphate. The protein is 4-hydroxy-3-methylbut-2-en-1-yl diphosphate synthase (flavodoxin) of Shigella boydii serotype 18 (strain CDC 3083-94 / BS512).